The following is a 643-amino-acid chain: NAD-dependent malic enzyme, mitochondrial (643 aa).

The transit peptide at 1 to 38 directs the protein to the mitochondrion; it reads PRVRSFIAHQSGITSVIRRSPDIAHRMVRSLSVSSQRN. Fumarate contacts are provided by Gln-116, Arg-119, and Arg-143. The active-site Proton donor is the Tyr-164. Arg-219 lines the (S)-malate pocket. Arg-219 contributes to the NAD(+) binding site. Lys-237 serves as the catalytic Proton acceptor. Residues Glu-309 and Asp-310 each contribute to the a divalent metal cation site. Asn-313, Asp-333, Ala-366, Ala-369, and Asn-472 together coordinate NAD(+). Asp-333 provides a ligand contact to a divalent metal cation. (S)-malate is bound by residues Asn-472 and Asn-516.

It belongs to the malic enzymes family. As to quaternary structure, homotetramer. Mg(2+) serves as cofactor. Mn(2+) is required as a cofactor.

It localises to the mitochondrion matrix. The catalysed reaction is (S)-malate + NAD(+) = pyruvate + CO2 + NADH. It carries out the reaction oxaloacetate + H(+) = pyruvate + CO2. With respect to regulation, subject to allosteric activation by fumarate. In terms of biological role, NAD-dependent mitochondrial malic enzyme that catalyzes the oxidative decarboxylation of malate to pyruvate. The polypeptide is NAD-dependent malic enzyme, mitochondrial (Ascaris suum (Pig roundworm)).